The primary structure comprises 129 residues: Lysozyme C (129 aa).

Residues 1–129 (KVFGRCELAA…VRVWIKGCRL (129 aa)) enclose the C-type lysozyme domain. 4 disulfides stabilise this stretch: cysteine 6-cysteine 127, cysteine 30-cysteine 115, cysteine 64-cysteine 80, and cysteine 76-cysteine 94. Active-site residues include glutamate 35 and aspartate 52.

The protein belongs to the glycosyl hydrolase 22 family. Monomer.

The protein resides in the secreted. It catalyses the reaction Hydrolysis of (1-&gt;4)-beta-linkages between N-acetylmuramic acid and N-acetyl-D-glucosamine residues in a peptidoglycan and between N-acetyl-D-glucosamine residues in chitodextrins.. Lysozymes have primarily a bacteriolytic function; those in tissues and body fluids are associated with the monocyte-macrophage system and enhance the activity of immunoagents. The protein is Lysozyme C (LYZ) of Numida meleagris (Helmeted guineafowl).